Consider the following 134-residue polypeptide: DNA-binding protein H-NS (134 aa).

The DNA-binding element occupies 111–116 (QGRTLA).

The protein belongs to the histone-like protein H-NS family. As to quaternary structure, homodimer that oligomerizes on DNA into higher-order complexes that form bridges between disparate regions of DNA compacting it. Interacts with YmoA and other similar proteins.

The protein localises to the cytoplasm. The protein resides in the nucleoid. A DNA-binding protein implicated in transcriptional repression and chromosome organization and compaction. Binds nucleation sites in AT-rich DNA and bridges them, forming higher-order nucleoprotein complexes and condensing the chromosome. As many horizontally transferred genes are AT-rich, it plays a central role in silencing foreign genes. A subset of genes are repressed by H-NS in association with other proteins. This chain is DNA-binding protein H-NS (hns), found in Proteus vulgaris.